Consider the following 316-residue polypeptide: MNTSITARELFDQQRDKLALRWVAGPKGEHREIQAGSNNARRPSLAGYLNVIYPNKVQILGTEELAWLDSLDARQRWETIEKIIQVQPLALAISKNQSCPEDLRAAADESNTPLWISSKRGHELLNHLSYHLARTLAPRVTLHGVFMEIYSIGVLITGEAGSGKSELALELLSRGHRLVADDAPEFTQIAPDVLDGTCPELLQDLLEVRGLGVLNVRDMFGDTAVKKNKYLRLIVHLTRPMTEPTPSGYERLTGDSGSRHVLDLDVPLITLPVMPGRNLAVLTEAATRLHILRTKGIDPAAMFIARHSNLLERRTP.

Residues H143 and K164 contribute to the active site. Position 158 to 165 (G158 to S165) interacts with ATP. S165 is a binding site for Mg(2+). D182 serves as the catalytic Proton acceptor; for phosphorylation activity. Proton donor; for dephosphorylation activity. Residues L206–N215 are important for the catalytic mechanism of both phosphorylation and dephosphorylation. Mg(2+) is bound at residue E207. Residue R251 is part of the active site. Residues P272–R277 form an important for the catalytic mechanism of dephosphorylation region.

It belongs to the HPrK/P family. Homohexamer. Mg(2+) is required as a cofactor.

The catalysed reaction is [HPr protein]-L-serine + ATP = [HPr protein]-O-phospho-L-serine + ADP + H(+). It carries out the reaction [HPr protein]-O-phospho-L-serine + phosphate + H(+) = [HPr protein]-L-serine + diphosphate. Catalyzes the ATP- as well as the pyrophosphate-dependent phosphorylation of a specific serine residue in HPr, a phosphocarrier protein of the phosphoenolpyruvate-dependent sugar phosphotransferase system (PTS). HprK/P also catalyzes the pyrophosphate-producing, inorganic phosphate-dependent dephosphorylation (phosphorolysis) of seryl-phosphorylated HPr (P-Ser-HPr). The sequence is that of HPr kinase/phosphorylase from Xanthomonas euvesicatoria pv. vesicatoria (strain 85-10) (Xanthomonas campestris pv. vesicatoria).